Here is a 337-residue protein sequence, read N- to C-terminus: Glyceraldehyde-3-phosphate dehydrogenase 1, cytosolic (337 aa).

NAD(+) is bound by residues 13–14 (RI), Asp35, and Arg82. D-glyceraldehyde 3-phosphate-binding positions include 153–155 (SCT), Thr184, 213–214 (TG), and Arg236. Cys154 serves as the catalytic Nucleophile. NAD(+) is bound at residue Asn318.

The protein belongs to the glyceraldehyde-3-phosphate dehydrogenase family. As to quaternary structure, homotetramer.

Its subcellular location is the cytoplasm. It carries out the reaction D-glyceraldehyde 3-phosphate + phosphate + NAD(+) = (2R)-3-phospho-glyceroyl phosphate + NADH + H(+). The protein operates within carbohydrate degradation; glycolysis; pyruvate from D-glyceraldehyde 3-phosphate: step 1/5. In terms of biological role, key enzyme in glycolysis that catalyzes the first step of the pathway by converting D-glyceraldehyde 3-phosphate (G3P) into 3-phospho-D-glyceroyl phosphate. Essential for the maintenance of cellular ATP levels and carbohydrate metabolism. The chain is Glyceraldehyde-3-phosphate dehydrogenase 1, cytosolic (GAPC) from Hordeum vulgare (Barley).